The chain runs to 660 residues: Bifunctional polymyxin resistance protein ArnA (660 aa).

A formyltransferase ArnAFT region spans residues 1-304 (MKAVIFAYHD…TLGLVAGARL (304 aa)). Histidine 104 functions as the Proton donor; for formyltransferase activity in the catalytic mechanism. Residues arginine 114 and 136-140 (VKRAD) contribute to the (6R)-10-formyltetrahydrofolate site. Positions 314-660 (RRIRVLILGV…RSVDVAERAS (347 aa)) are dehydrogenase ArnADH. NAD(+)-binding positions include aspartate 347 and 368 to 369 (DI). UDP-alpha-D-glucuronate is bound by residues alanine 393, tyrosine 398, and 432–433 (TS). The active-site Proton acceptor; for decarboxylase activity is the glutamate 434. UDP-alpha-D-glucuronate is bound by residues arginine 460, asparagine 492, 526–535 (KLIDGGQQKR), and tyrosine 613. The Proton donor; for decarboxylase activity role is filled by arginine 619.

The protein in the N-terminal section; belongs to the Fmt family. UDP-L-Ara4N formyltransferase subfamily. In the C-terminal section; belongs to the NAD(P)-dependent epimerase/dehydratase family. UDP-glucuronic acid decarboxylase subfamily. In terms of assembly, homohexamer, formed by a dimer of trimers.

The catalysed reaction is UDP-alpha-D-glucuronate + NAD(+) = UDP-beta-L-threo-pentopyranos-4-ulose + CO2 + NADH. It carries out the reaction UDP-4-amino-4-deoxy-beta-L-arabinose + (6R)-10-formyltetrahydrofolate = UDP-4-deoxy-4-formamido-beta-L-arabinose + (6S)-5,6,7,8-tetrahydrofolate + H(+). It participates in nucleotide-sugar biosynthesis; UDP-4-deoxy-4-formamido-beta-L-arabinose biosynthesis; UDP-4-deoxy-4-formamido-beta-L-arabinose from UDP-alpha-D-glucuronate: step 1/3. The protein operates within nucleotide-sugar biosynthesis; UDP-4-deoxy-4-formamido-beta-L-arabinose biosynthesis; UDP-4-deoxy-4-formamido-beta-L-arabinose from UDP-alpha-D-glucuronate: step 3/3. It functions in the pathway bacterial outer membrane biogenesis; lipopolysaccharide biosynthesis. Its function is as follows. Bifunctional enzyme that catalyzes the oxidative decarboxylation of UDP-glucuronic acid (UDP-GlcUA) to UDP-4-keto-arabinose (UDP-Ara4O) and the addition of a formyl group to UDP-4-amino-4-deoxy-L-arabinose (UDP-L-Ara4N) to form UDP-L-4-formamido-arabinose (UDP-L-Ara4FN). The modified arabinose is attached to lipid A and is required for resistance to polymyxin and cationic antimicrobial peptides. This Salmonella heidelberg (strain SL476) protein is Bifunctional polymyxin resistance protein ArnA.